Consider the following 506-residue polypeptide: BTB/POZ domain-containing protein 16 (506 aa).

The region spanning 150-206 is the BTB domain; sequence INDPAVTRVAFALALKNLYMNEVEMTVDNVLGVLASAHILQFNRLFRKCVSTMLNRL.

The protein is BTB/POZ domain-containing protein 16 (Btbd16) of Rattus norvegicus (Rat).